The following is a 227-amino-acid chain: Large ribosomal subunit protein uL3 (227 aa).

Belongs to the universal ribosomal protein uL3 family. As to quaternary structure, part of the 50S ribosomal subunit. Forms a cluster with proteins L14 and L19.

One of the primary rRNA binding proteins, it binds directly near the 3'-end of the 23S rRNA, where it nucleates assembly of the 50S subunit. The chain is Large ribosomal subunit protein uL3 from Leuconostoc citreum (strain KM20).